We begin with the raw amino-acid sequence, 429 residues long: Ribosomal RNA small subunit methyltransferase B (429 aa).

S-adenosyl-L-methionine is bound by residues cysteine 254–lysine 260, aspartate 277, aspartate 303, and aspartate 322. The active-site Nucleophile is the cysteine 375.

Belongs to the class I-like SAM-binding methyltransferase superfamily. RsmB/NOP family.

Its subcellular location is the cytoplasm. The enzyme catalyses cytidine(967) in 16S rRNA + S-adenosyl-L-methionine = 5-methylcytidine(967) in 16S rRNA + S-adenosyl-L-homocysteine + H(+). Specifically methylates the cytosine at position 967 (m5C967) of 16S rRNA. The protein is Ribosomal RNA small subunit methyltransferase B of Shigella sonnei (strain Ss046).